The chain runs to 273 residues: MHDANIRVAIAGAGGRMGRQLIQAALALEGVQLGAALEREGSSLLGSDAGELAGAGKTGVTVQSSLDAIKDDFDVFIDFTRPEGTLNHLAFCRQHGKGMVIGTTGFDEAGKQAIRDAAADIAIVFAANFSVGVNVMLKLLEKAAKVMGDYTDIEIIEAHHRHKVDAPSGTALAMGEAIAHALDKDLKDCAVYSREGHTGERVPGTIGFATVRAGDIVGEHTAMFADIGERLEITHKASSRMTFANGAVRSALWLSGKENGLFDMRDVLDLNNL.

NAD(+) contacts are provided by residues G12–M17 and E38. R39 serves as a coordination point for NADP(+). NAD(+) contacts are provided by residues G102 to T104 and A126 to F129. The active-site Proton donor/acceptor is H159. H160 lines the (S)-2,3,4,5-tetrahydrodipicolinate pocket. The active-site Proton donor is K163. G169–T170 is a (S)-2,3,4,5-tetrahydrodipicolinate binding site.

It belongs to the DapB family. In terms of assembly, homotetramer.

Its subcellular location is the cytoplasm. It catalyses the reaction (S)-2,3,4,5-tetrahydrodipicolinate + NAD(+) + H2O = (2S,4S)-4-hydroxy-2,3,4,5-tetrahydrodipicolinate + NADH + H(+). The catalysed reaction is (S)-2,3,4,5-tetrahydrodipicolinate + NADP(+) + H2O = (2S,4S)-4-hydroxy-2,3,4,5-tetrahydrodipicolinate + NADPH + H(+). It participates in amino-acid biosynthesis; L-lysine biosynthesis via DAP pathway; (S)-tetrahydrodipicolinate from L-aspartate: step 4/4. Functionally, catalyzes the conversion of 4-hydroxy-tetrahydrodipicolinate (HTPA) to tetrahydrodipicolinate. This is 4-hydroxy-tetrahydrodipicolinate reductase from Escherichia coli O157:H7.